Consider the following 431-residue polypeptide: Glucose-1-phosphate adenylyltransferase (431 aa).

Lys39 is a beta-D-fructose 1,6-bisphosphate binding site. 3 residues coordinate AMP: Arg40, His46, and Arg52. Alpha-D-glucose 1-phosphate is bound at residue Tyr114. An AMP-binding site is contributed by Arg130. Residues Gly179, 194–195 (EK), and Ser212 contribute to the alpha-D-glucose 1-phosphate site. 2 residues coordinate AMP: Glu370 and Arg386. Beta-D-fructose 1,6-bisphosphate-binding positions include 419–423 (REMLR) and 429–431 (QER).

Belongs to the bacterial/plant glucose-1-phosphate adenylyltransferase family. As to quaternary structure, homotetramer.

The enzyme catalyses alpha-D-glucose 1-phosphate + ATP + H(+) = ADP-alpha-D-glucose + diphosphate. The protein operates within glycan biosynthesis; glycogen biosynthesis. Its activity is regulated as follows. Allosterically activated by fructose-1,6-bisphosphate (F16BP) and inhibited by AMP. In terms of biological role, involved in the biosynthesis of ADP-glucose, a building block required for the elongation reactions to produce glycogen. Catalyzes the reaction between ATP and alpha-D-glucose 1-phosphate (G1P) to produce pyrophosphate and ADP-Glc. The sequence is that of Glucose-1-phosphate adenylyltransferase from Escherichia fergusonii (strain ATCC 35469 / DSM 13698 / CCUG 18766 / IAM 14443 / JCM 21226 / LMG 7866 / NBRC 102419 / NCTC 12128 / CDC 0568-73).